Consider the following 919-residue polypeptide: MDVENRECSADLAEELRKLSASRSLSEEVGVDPALVSEGAPEGVIEGPAVVSSPAKMYTALKAVDDEMPPLKSENKAVVETEKVESKPRGFSAIDFAEEDGDSDADAEDEDDEDDEDDDEDDDDEDDKDMVTAKALAELANASGKKSSMGAAGPSLPSLPQRPAVRKTAAATALDTAGRITQRPNGAPSTQLTATTEENANSDTAEGNETREKLQNIRVKFLRLAHRLGQSPQNVVVAQVLYRLGLAESLRGGNTSNRAGAFSFDRANALAEEQEAANQEEELDFACTILVLGKTGVGKSATINSIFDDRKSVTSAFKPSTNKVQEIVGTVHGIKVRVIDTPGLLPSVADQQHNERIMGQVKKHIKKASPDIVLYFDRLDMQSRDFGDLPLLKTITDLFGAAVWFNAIVVLTHASSAPPDGPNGVPLSYEMFVAQRSHVVQQTIRQAAGDMRLMNPVSLVENHPACRTNRNGQRVLPNGQIWKPQLLLLCFASKILAEANSLLKLQETATPGRPFGQRSRVPPLPFLLSSLLQSRAQLKLPDEQLDESDESDDDEEEEDSEADDYDELPPFRPLSKEELEELTKEQRQDYMDELADRERLFQKKQYREEMRRRKEMKKRQAQMSKEELAQPDEADDEAGQPAAVPVPMPDMALPPSFDSDNPTHRYRYLETANQWLVRPVLETHGWDHDAGYDGFNVEKMFVVKNKIPASISGQVTKDKKESQVNFEAAASLKHGEGKVTLTGFDVQTIGKDLAYTLRAETRFNNFKRNKTTAGVTATYLNDTIAAGVKLEDRILIGKRVKMVVNGGVLTGKGDKAFGGSLEATLRGKEYPLSRTLSTLGLSVMDWHGDLAIGGNLQSQFMVGKTMMVGRANLNNRGSGQVSIRASSSEQLQMVLIGIVPILRSLINCRFGFGGGQSSQ.

2 disordered regions span residues 20-47 (SASRSLSEEVGVDPALVSEGAPEGVIEG) and 64-211 (VDDE…NETR). Over residues 73-88 (SENKAVVETEKVESKP) the composition is skewed to basic and acidic residues. Residues 96–128 (FAEEDGDSDADAEDEDDEDDEDDDEDDDDEDDK) show a composition bias toward acidic residues. Residues 182 to 207 (QRPNGAPSTQLTATTEENANSDTAEG) are compositionally biased toward polar residues. The region spanning 284 to 513 (DFACTILVLG…KLQETATPGR (230 aa)) is the AIG1-type G domain. The tract at residues 293 to 300 (GKTGVGKS) is G1. Residue 296-301 (GVGKSA) coordinates GTP. S300 serves as a coordination point for Mg(2+). The tract at residues 319–323 (PSTNK) is G2. Residues 340 to 343 (DTPG) form a G3 region. The G4 stretch occupies residues 412-415 (THAS). GTP-binding positions include H413 and 461–462 (EN). The interval 461 to 463 (ENH) is G5. Disordered stretches follow at residues 540–585 (LPDE…LTKE) and 611–650 (RRRKEMKKRQAQMSKEELAQPDEADDEAGQPAAVPVPMPD). The segment covering 543–567 (EQLDESDESDDDEEEEDSEADDYDE) has biased composition (acidic residues). Basic and acidic residues predominate over residues 574–585 (LSKEELEELTKE). A compositionally biased stretch (acidic residues) spans 629 to 638 (AQPDEADDEA). The span at 641-650 (PAAVPVPMPD) shows a compositional bias: low complexity. The helical transmembrane segment at 893 to 914 (MVLIGIVPILRSLINCRFGFGG) threads the bilayer.

Belongs to the TRAFAC class TrmE-Era-EngA-EngB-Septin-like GTPase superfamily. AIG1/Toc34/Toc159-like paraseptin GTPase family. TOC159 subfamily. In terms of assembly, part of the TOC core complex. Mg(2+) serves as cofactor.

Its subcellular location is the plastid. The protein resides in the chloroplast outer membrane. Functionally, GTPase involved in protein precursor import into chloroplasts. Seems to recognize chloroplast-destined precursor proteins and regulate their presentation to the translocation channel through GTP hydrolysis. Probably specialized in the import of nuclear encoded non-photosynthetic preproteins from the cytoplasm to the chloroplast. The protein is Translocase of chloroplast 101, chloroplastic of Physcomitrium patens (Spreading-leaved earth moss).